We begin with the raw amino-acid sequence, 99 residues long: (4S)-4-hydroxy-5-phosphonooxypentane-2,3-dione isomerase (99 aa).

The ABM domain occupies 2 to 91 (HVTLVEINVK…ISEPRKKRSF (90 aa)).

The protein belongs to the LsrG family. Homodimer.

The protein resides in the cytoplasm. It catalyses the reaction (2S)-2-hydroxy-3,4-dioxopentyl phosphate = 3-hydroxy-2,4-dioxopentyl phosphate. Involved in the degradation of phospho-AI-2, thereby terminating induction of the lsr operon and closing the AI-2 signaling cycle. Catalyzes the conversion of (4S)-4-hydroxy-5-phosphonooxypentane-2,3-dione (P-DPD) to 3-hydroxy-5-phosphonooxypentane-2,4-dione (P-HPD). The sequence is that of (4S)-4-hydroxy-5-phosphonooxypentane-2,3-dione isomerase from Photorhabdus laumondii subsp. laumondii (strain DSM 15139 / CIP 105565 / TT01) (Photorhabdus luminescens subsp. laumondii).